A 228-amino-acid polypeptide reads, in one-letter code: Abnormal cell migration protein 18 (228 aa).

The first 19 residues, 1-19 (MTFTLRLLVLCTVYSYVIS), serve as a signal peptide directing secretion. N135 and N159 each carry an N-linked (GlcNAc...) asparagine glycan.

Expressed in body wall muscle.

The protein resides in the secreted. Its subcellular location is the extracellular space. It localises to the extracellular matrix. The protein localises to the basement membrane. Required for the directional control of distal tip cell migration during gonadogenesis, probably by recruiting fibulin fbl-1 to the gonad basement membrane. This Caenorhabditis elegans protein is Abnormal cell migration protein 18.